The primary structure comprises 340 residues: Ribonucleoside-diphosphate reductase small subunit (340 aa).

Fe cation-binding residues include Asp94, Glu124, and His127. Tyr131 is an active-site residue. Residues 180–200 traverse the membrane as a helical segment; the sequence is FILMILIEGIFFAASFAAIAY. Positions 187, 221, and 224 each coordinate Fe cation.

Belongs to the ribonucleoside diphosphate reductase small chain family. As to quaternary structure, heterotetramer composed of a homodimer of the large subunit (R1) and a homodimer of the small subunit (R2). Larger multisubunit protein complex are also active, composed of (R1)n(R2)n. It depends on Fe cation as a cofactor.

The protein localises to the host membrane. The enzyme catalyses a 2'-deoxyribonucleoside 5'-diphosphate + [thioredoxin]-disulfide + H2O = a ribonucleoside 5'-diphosphate + [thioredoxin]-dithiol. Ribonucleoside-diphosphate reductase holoenzyme provides the precursors necessary for viral DNA synthesis. Allows virus growth in non-dividing cells, as well as reactivation from latency in infected hosts. Catalyzes the biosynthesis of deoxyribonucleotides from the corresponding ribonucleotides. This chain is Ribonucleoside-diphosphate reductase small subunit, found in Human herpesvirus 1 (strain KOS) (HHV-1).